The following is a 37-amino-acid chain: Large ribosomal subunit protein bL36 (37 aa).

It belongs to the bacterial ribosomal protein bL36 family.

The polypeptide is Large ribosomal subunit protein bL36 (Parasynechococcus marenigrum (strain WH8102)).